Consider the following 291-residue polypeptide: HTH-type transcriptional activator AmpR (291 aa).

Residues 6–63 enclose the HTH lysR-type domain; it reads LPLNSLRAFEAAARHLSFTHAAIELNVTHSAISQHVKTLEQHLNCQLFVRVSRGLMLT. A DNA-binding region (H-T-H motif) is located at residues 23–42; the sequence is FTHAAIELNVTHSAISQHVK.

It belongs to the LysR transcriptional regulatory family.

It is found in the cytoplasm. This protein is a positive regulator of gene expression of cephalosporinase (AmpC). In Enterobacter cloacae, this protein is HTH-type transcriptional activator AmpR (ampR).